The chain runs to 276 residues: Aquaporin-6 (276 aa).

Over 1–22 (MEPGLCNRAYLLVGGLWTAISK) the chain is Cytoplasmic. Residues 23 to 43 (ALFAEFLATGLYVFFGVGSVL) traverse the membrane as a helical segment. Residues 44–51 (PWPVALPS) are Extracellular-facing. A helical membrane pass occupies residues 52 to 70 (VLQVAITFNLATATAVQIS). Residues 71-75 (WKTSG) are Cytoplasmic-facing. The segment at residues 76–85 (AHANPAVTLA) is an intramembrane region (discontinuously helical). An NPA 1 motif is present at residues 79–81 (NPA). Residues 86 to 96 (YLVGSHISLPR) lie on the Cytoplasmic side of the membrane. Residues 97–118 (AVAYIAAQLAGATVGAALLYGV) traverse the membrane as a helical segment. Residues 119 to 138 (TPGGVRETLGVNVVHNSTST) are Extracellular-facing. N134 carries an N-linked (GlcNAc...) asparagine glycan. A helical transmembrane segment spans residues 139–159 (GQAVAVELVLTLQLVLCVFAS). Topologically, residues 160 to 165 (MDSRQT) are cytoplasmic. A helical membrane pass occupies residues 166 to 185 (LGSPAAMIGTSVALGHLIGI). Topologically, residues 186–189 (YFTG) are extracellular. The discontinuously helical intramembrane region spans 190–202 (CSMNPARSFGPAV). An NPA 2 motif is present at residues 193-195 (NPA). Over 203 to 210 (IVGKFAVH) the chain is Extracellular. Residues 211-231 (WIFWVGPLTGAVLASLIYNFI) traverse the membrane as a helical segment. The Cytoplasmic portion of the chain corresponds to 232-276 (LFPDTKTVAQRLAILVGTTKVEKVVDLEPQKKESQTNSEDTEVSV).

Belongs to the MIP/aquaporin (TC 1.A.8) family. Homotetramer; each monomer provides an independent solute pore. Post-translationally, N-glycosylated. In terms of tissue distribution, kidney.

Its subcellular location is the cytoplasmic vesicle membrane. It carries out the reaction nitrate(in) = nitrate(out). It catalyses the reaction iodide(out) = iodide(in). The enzyme catalyses bromide(in) = bromide(out). The catalysed reaction is chloride(in) = chloride(out). It carries out the reaction Na(+)(in) = Na(+)(out). It catalyses the reaction H2O(in) = H2O(out). The enzyme catalyses CO2(out) = CO2(in). The catalysed reaction is NH4(+)(in) = NH4(+)(out). Activated by mercury and pH-gated, anion permeability is observed at pH 5.5 and increases markedly at pH 4.0. Selectivity for chloride increases at low pH. The water channel activity is stimulated by mercury by opposition to other aquaporins. In terms of biological role, aquaporins form homotetrameric transmembrane channels, with each monomer independently mediating water transport across the plasma membrane along its osmotic gradient. Unlike classical aquaporins, AQP6 is an intracellular channel with selective anion permeability, particularly for nitrate, and exhibits very low water permeability. It may also facilitate the transport of gases, such as CO2 and NH4(+), as demonstrated in vitro. In Rattus norvegicus (Rat), this protein is Aquaporin-6.